A 512-amino-acid chain; its full sequence is Cytochrome P450 1A2 (512 aa).

An O-linked (GlcNAc) serine glycan is attached at Ser65. Phe222 is a binding site for substrate. Cys454 provides a ligand contact to heme.

Belongs to the cytochrome P450 family. In terms of assembly, interacts with PGRMC1; the interaction requires PGRMC1 homodimerization. Requires heme as cofactor. As to expression, constitutively expressed in liver.

It localises to the endoplasmic reticulum membrane. The protein localises to the microsome membrane. It catalyses the reaction an organic molecule + reduced [NADPH--hemoprotein reductase] + O2 = an alcohol + oxidized [NADPH--hemoprotein reductase] + H2O + H(+). The enzyme catalyses 17beta-estradiol + reduced [NADPH--hemoprotein reductase] + O2 = 2-hydroxy-17beta-estradiol + oxidized [NADPH--hemoprotein reductase] + H2O + H(+). The catalysed reaction is 17beta-estradiol + reduced [NADPH--hemoprotein reductase] + O2 = 4-hydroxy-17beta-estradiol + oxidized [NADPH--hemoprotein reductase] + H2O + H(+). It carries out the reaction estrone + reduced [NADPH--hemoprotein reductase] + O2 = 2-hydroxyestrone + oxidized [NADPH--hemoprotein reductase] + H2O + H(+). It catalyses the reaction estrone + reduced [NADPH--hemoprotein reductase] + O2 = 4-hydroxyestrone + oxidized [NADPH--hemoprotein reductase] + H2O + H(+). The enzyme catalyses cholesterol + reduced [NADPH--hemoprotein reductase] + O2 = 25-hydroxycholesterol + oxidized [NADPH--hemoprotein reductase] + H2O + H(+). The catalysed reaction is all-trans-retinol + reduced [NADPH--hemoprotein reductase] + O2 = all-trans-retinal + oxidized [NADPH--hemoprotein reductase] + 2 H2O + H(+). It carries out the reaction all-trans-retinal + reduced [NADPH--hemoprotein reductase] + O2 = all-trans-retinoate + oxidized [NADPH--hemoprotein reductase] + H2O + 2 H(+). It catalyses the reaction (5Z,8Z,11Z,14Z)-eicosatetraenoate + reduced [NADPH--hemoprotein reductase] + O2 = (14R,15S)-epoxy-(5Z,8Z,11Z)-eicosatrienoate + oxidized [NADPH--hemoprotein reductase] + H2O + H(+). The enzyme catalyses (5Z,8Z,11Z,14Z)-eicosatetraenoate + reduced [NADPH--hemoprotein reductase] + O2 = (14S,15R)-epoxy-(5Z,8Z,11Z)-eicosatrienoate + oxidized [NADPH--hemoprotein reductase] + H2O + H(+). The catalysed reaction is (5Z,8Z,11Z,14Z,17Z)-eicosapentaenoate + reduced [NADPH--hemoprotein reductase] + O2 = (17R,18S)-epoxy-(5Z,8Z,11Z,14Z)-eicosatetraenoate + oxidized [NADPH--hemoprotein reductase] + H2O + H(+). It carries out the reaction (4Z,7Z,10Z,13Z,16Z,19Z)-docosahexaenoate + reduced [NADPH--hemoprotein reductase] + O2 = (19R,20S)-epoxy-(4Z,7Z,10Z,13Z,16Z)-docosapentaenoate + oxidized [NADPH--hemoprotein reductase] + H2O + H(+). It catalyses the reaction (5S)-hydroperoxy-(6E,8Z,11Z,14Z)-eicosatetraenoate = 5-oxo-(6E,8Z,11Z,14Z)-eicosatetraenoate + H2O. The enzyme catalyses (12S)-hydroperoxy-(5Z,8Z,10E,14Z)-eicosatetraenoate = 12-oxo-(5Z,8Z,10E,14Z)-eicosatetraenoate + H2O. The catalysed reaction is (15S)-hydroperoxy-(5Z,8Z,11Z,13E)-eicosatetraenoate = 15-oxo-(5Z,8Z,11Z,13E)-eicosatetraenoate + H2O. It carries out the reaction (13S)-hydroperoxy-(9Z,11E)-octadecadienoate = 13-oxo-(9Z,11E)-octadecadienoate + H2O. It catalyses the reaction (5Z,8Z,11Z,14Z)-eicosatetraenoate + reduced [NADPH--hemoprotein reductase] + O2 = 13-hydroxy-(5Z,8Z,11Z,14Z)-eicosatetraenoate + oxidized [NADPH--hemoprotein reductase] + H2O + H(+). The enzyme catalyses (5Z,8Z,11Z,14Z)-eicosatetraenoate + reduced [NADPH--hemoprotein reductase] + O2 = 19-hydroxy-(5Z,8Z,11Z,14Z)-eicosatetraenoate + oxidized [NADPH--hemoprotein reductase] + H2O + H(+). The catalysed reaction is (9Z,12Z)-octadecadienoate + reduced [NADPH--hemoprotein reductase] + O2 = 11-hydroxy-(9Z,12Z)-octadecadienoate + oxidized [NADPH--hemoprotein reductase] + H2O + H(+). The protein operates within cofactor metabolism; retinol metabolism. It participates in steroid metabolism; cholesterol metabolism. It functions in the pathway lipid metabolism; arachidonate metabolism. Its function is as follows. A cytochrome P450 monooxygenase involved in the metabolism of various endogenous substrates, including fatty acids, steroid hormones and vitamins. Mechanistically, uses molecular oxygen inserting one oxygen atom into a substrate, and reducing the second into a water molecule, with two electrons provided by NADPH via cytochrome P450 reductase (NADPH--hemoprotein reductase). Catalyzes the hydroxylation of carbon-hydrogen bonds. Exhibits high catalytic activity for the formation of hydroxyestrogens from estrone (E1) and 17beta-estradiol (E2), namely 2-hydroxy E1 and E2. Metabolizes cholesterol toward 25-hydroxycholesterol, a physiological regulator of cellular cholesterol homeostasis. May act as a major enzyme for all-trans retinoic acid biosynthesis in the liver. Catalyzes two successive oxidative transformation of all-trans retinol to all-trans retinal and then to the active form all-trans retinoic acid. Primarily catalyzes stereoselective epoxidation of the last double bond of polyunsaturated fatty acids (PUFA), displaying a strong preference for the (R,S) stereoisomer. Catalyzes bisallylic hydroxylation and omega-1 hydroxylation of PUFA. May also participate in eicosanoids metabolism by converting hydroperoxide species into oxo metabolites (lipoxygenase-like reaction, NADPH-independent). Plays a role in the oxidative metabolism of xenobiotics. Catalyzes the N-hydroxylation of heterocyclic amines and the O-deethylation of phenacetin. Metabolizes caffeine via N3-demethylation. In Canis lupus familiaris (Dog), this protein is Cytochrome P450 1A2 (CYP1A2).